The sequence spans 90 residues: Large ribosomal subunit protein bL27 (90 aa).

A compositionally biased stretch (low complexity) spans 1 to 13 (MATKKSGGSSSNG). A disordered region spans residues 1–20 (MATKKSGGSSSNGRDSRGRR).

The protein belongs to the bacterial ribosomal protein bL27 family.

The protein is Large ribosomal subunit protein bL27 of Anaplasma marginale (strain Florida).